A 781-amino-acid polypeptide reads, in one-letter code: Catenin beta-1 (781 aa).

Residues 34-56 (GIHSGATTTAPSLSGKGNPEDED) form a disordered region. ARM repeat units lie at residues 141–180 (NYQDDAELATRAIPELTKLLNDEDQVVVNKAAVMVHQLSK), 225–264 (REGLLAIFKSGGIPALVKMLGSPVDSVLFYAITTLHNLLL), 267–306 (EGAKMAVRLAGGLQKMVALLNKTNVKFLAITTDCLQILAY), 351–390 (SSNKPAIVEAGGMQALGLHLTDSSQRLVQNCLWTLRNLSD), 391–429 (AATKQEGMEGLLGTLVQLLGSDDINVVTCAAGILSNLTC), 432–473 (YKNK…HLTS), 479–519 (EMAQ…NLAL), 521–562 (PANH…QFVE), 584–623 (IHNRIVIRGLNTIPLFVQLLYSPIENIQRVAAGVLCDVAQ), and 625–664 (KEAAEAIEAEGATAPLTELLHSRNEGVATYAAAVLFRMSE). The segment covering 735 to 745 (MDHDMGGHHPG) has biased composition (basic and acidic residues). The segment at 735–781 (MDHDMGGHHPGADYPVDGLPDLSHAQDLMDGLPPGDSNQLAWFDTDL) is disordered.

Belongs to the beta-catenin family. In terms of assembly, interacts with EP-Cadherin/CDH3. Interacts with custos; the interaction is positively regulated by Wnt stimulation. In terms of processing, phosphorylation by gsk3b promotes ubiquitination and subsequent degradation by the proteasome. Post-translationally, ubiquitinated when phosphorylated by gsk3b, leading to its degradation. As to expression, expressed at intercalated disks in the heart (at protein level).

Its subcellular location is the cytoplasm. The protein localises to the nucleus. The protein resides in the cell membrane. Its function is as follows. Key downstream component of the canonical Wnt signaling pathway. In the absence of Wnt, forms a complex with axin1, axin2, apc, csnk1a1 and gsk3b that promotes phosphorylation on N-terminal Ser and Thr residues and ubiquitination of ctnnb1 and its subsequent degradation by the proteasome. In the presence of Wnt ligand, ctnnb1 is not ubiquitinated and accumulates in the nucleus, where it acts as a coactivator for transcription factors of the TCF/LEF family, leading to activate Wnt responsive genes. Plays a key role in dorsoventral patterning: in prospective ventral blastomeres, its down-regulation by axin1 and axin2 leads to inhibit the Wnt signaling pathway, while in prospective dorsal blastomeres, degradation of axin results in stabilization and nuclear translocation of ctnnb1. The polypeptide is Catenin beta-1 (Xenopus laevis (African clawed frog)).